Consider the following 562-residue polypeptide: Chaperonin GroEL 1 (562 aa).

Residues 30–33 (TLGP), lysine 51, 87–91 (DGTTT), glycine 415, 478–480 (NAA), and aspartate 494 each bind ATP.

The protein belongs to the chaperonin (HSP60) family. As to quaternary structure, forms a cylinder of 14 subunits composed of two heptameric rings stacked back-to-back. Interacts with the co-chaperonin GroES.

The protein resides in the cytoplasm. It carries out the reaction ATP + H2O + a folded polypeptide = ADP + phosphate + an unfolded polypeptide.. In terms of biological role, together with its co-chaperonin GroES, plays an essential role in assisting protein folding. The GroEL-GroES system forms a nano-cage that allows encapsulation of the non-native substrate proteins and provides a physical environment optimized to promote and accelerate protein folding. This chain is Chaperonin GroEL 1, found in Sorangium cellulosum (strain So ce56) (Polyangium cellulosum (strain So ce56)).